The sequence spans 356 residues: Golgi-resident adenosine 3',5'-bisphosphate 3'-phosphatase (356 aa).

The residue at position 1 (Met1) is an N-acetylmethionine. Topologically, residues 1 to 12 are cytoplasmic; it reads MAPMGIRLSPLG. A helical membrane pass occupies residues 13–33; the sequence is VAVFFLLGLGVLYHLYSGFLA. Residues 34–356 lie on the Lumenal side of the membrane; the sequence is GRFSLFGLGS…KLPDLEKSGH (323 aa). Residues 84–104 are disordered; the sequence is ESNVLHEKSKGKTREGADDKM. Asp108 functions as the Proton acceptor in the catalytic mechanism. Glu131, Asp172, Leu174, and Asp175 together coordinate Mg(2+). Thr177 functions as the Proton acceptor in the catalytic mechanism. 2 residues coordinate AMP: Ser240 and His243. N-linked (GlcNAc...) asparagine glycosylation occurs at Asn257. Residues Gly266 and Lys270 each coordinate AMP. Residue Asp298 coordinates Mg(2+).

Belongs to the inositol monophosphatase superfamily. Requires Mg(2+) as cofactor. Post-translationally, N-glycosylated. Contains N-linked glycan resistant to endoglycosydase H.

Its subcellular location is the golgi apparatus. The protein localises to the trans-Golgi network membrane. It carries out the reaction adenosine 3',5'-bisphosphate + H2O = AMP + phosphate. It functions in the pathway sulfur metabolism. With respect to regulation, strongly inhibited by lithium. Functionally, exhibits 3'-nucleotidase activity toward adenosine 3',5'-bisphosphate (PAP), namely hydrolyzes adenosine 3',5'-bisphosphate into adenosine 5'-monophosphate (AMP) and a phosphate. May play a role in the formation of skeletal elements derived through endochondral ossification, possibly by clearing adenosine 3',5'-bisphosphate produced by Golgi sulfotransferases during glycosaminoglycan sulfation. Has no activity toward 3'-phosphoadenosine 5'-phosphosulfate (PAPS) or inositol phosphate (IP) substrates including I(1)P, I(1,4)P2, I(1,3,4)P3, I(1,4,5)P3 and I(1,3,4,5)P4. This is Golgi-resident adenosine 3',5'-bisphosphate 3'-phosphatase from Mus musculus (Mouse).